A 236-amino-acid polypeptide reads, in one-letter code: 2,3,4,5-tetrahydropyridine-2,6-dicarboxylate N-acetyltransferase (236 aa).

This sequence belongs to the transferase hexapeptide repeat family. DapH subfamily.

The enzyme catalyses (S)-2,3,4,5-tetrahydrodipicolinate + acetyl-CoA + H2O = L-2-acetamido-6-oxoheptanedioate + CoA. It functions in the pathway amino-acid biosynthesis; L-lysine biosynthesis via DAP pathway; LL-2,6-diaminopimelate from (S)-tetrahydrodipicolinate (acetylase route): step 1/3. Catalyzes the transfer of an acetyl group from acetyl-CoA to tetrahydrodipicolinate. The chain is 2,3,4,5-tetrahydropyridine-2,6-dicarboxylate N-acetyltransferase from Clostridium botulinum (strain Alaska E43 / Type E3).